A 95-amino-acid polypeptide reads, in one-letter code: Cell division protein FtsB (95 aa).

Over 1–3 (MRL) the chain is Cytoplasmic. A helical transmembrane segment spans residues 4 to 21 (FILILSAILLLFQYDLWF). Topologically, residues 22–95 (GKNGYLDYKE…RIAKENKDNR (74 aa)) are periplasmic. Residues 28–62 (DYKETAEEIAMHKAENTKLSQRNQVVAAEIRDLKD) are a coiled coil.

It belongs to the FtsB family. As to quaternary structure, part of a complex composed of FtsB, FtsL and FtsQ.

Its subcellular location is the cell inner membrane. Its function is as follows. Essential cell division protein. May link together the upstream cell division proteins, which are predominantly cytoplasmic, with the downstream cell division proteins, which are predominantly periplasmic. The sequence is that of Cell division protein FtsB from Mannheimia succiniciproducens (strain KCTC 0769BP / MBEL55E).